The sequence spans 329 residues: MKVLWAALVVALLAGCWADVEPESPLEENLEPELEPKRELEQEVEPEAGWQAGQPWELALARFWDYLRWVQTLSDQVQEEVLSNQVTQELTTLMEETMKEIKAYRAELEEQLGPMASETQARVAKELQAAQARLRSDMEDVRTRLSQYRGEVQAMLGQSTEELRARFASHMRKLRKRVLRDAEDLQKRLAVYRAGVREGAERSVSTIRERLWPLLEQARTRHAKVDALATQPLRERVNALGQQLRGRLEEVGSRARSHLDEVREQMEEVQAKMEEQANQMRQQAEAFQARLKGWFEPLVEDMQRQWAVLVEKVQAAVGTSPTTPPVETK.

A signal peptide spans 1-18 (MKVLWAALVVALLAGCWA). Tandem repeats lie at residues 92–113 (TLME…EQLG), 114–135 (PMAS…ARLR), 136–157 (SDME…AMLG), 158–179 (QSTE…KRVL), 180–201 (RDAE…EGAE), 202–223 (RSVS…TRHA), 224–245 (KVDA…QQLR), and 246–267 (GRLE…EQME). The 8 X 22 AA approximate tandem repeats stretch occupies residues 92-267 (TLMEETMKEI…HLDEVREQME (176 aa)). Methionine sulfoxide is present on M155. A Phosphoserine modification is found at S159. The tract at residues 170 to 180 (HMRKLRKRVLR) is LDL and other lipoprotein receptors binding. 174–177 (LRKR) is a binding site for heparin. Residues 222–302 (HAKVDALATQ…GWFEPLVEDM (81 aa)) form a lipid-binding and lipoprotein association region. 241–248 (GQQLRGRL) contacts heparin. Positions 278–329 (NQMRQQAEAFQARLKGWFEPLVEDMQRQWAVLVEKVQAAVGTSPTTPPVETK) are homooligomerization. Residues 290–302 (RLKGWFEPLVEDM) are specificity for association with VLDL.

This sequence belongs to the apolipoprotein A1/A4/E family. In terms of assembly, homotetramer. May interact with ABCA1; functionally associated with ABCA1 in the biogenesis of HDLs. May interact with APP/A4 amyloid-beta peptide; the interaction is extremely stable in vitro but its physiological significance is unclear. May interact with MAPT. May interact with MAP2. In the cerebrospinal fluid, interacts with secreted SORL1. Interacts with PMEL; this allows the loading of PMEL luminal fragment on ILVs to induce fibril nucleation. APOE exists as multiple glycosylated and sialylated glycoforms within cells and in plasma. The extent of glycosylation and sialylation are tissue and context specific. In terms of processing, glycated in plasma VLDL. Post-translationally, phosphorylated by FAM20C in the extracellular medium.

It localises to the secreted. The protein resides in the extracellular space. It is found in the extracellular matrix. The protein localises to the extracellular vesicle. Its subcellular location is the endosome. It localises to the multivesicular body. Functionally, APOE is an apolipoprotein, a protein associating with lipid particles, that mainly functions in lipoprotein-mediated lipid transport between organs via the plasma and interstitial fluids. APOE is a core component of plasma lipoproteins and is involved in their production, conversion and clearance. Apolipoproteins are amphipathic molecules that interact both with lipids of the lipoprotein particle core and the aqueous environment of the plasma. As such, APOE associates with chylomicrons, chylomicron remnants, very low density lipoproteins (VLDL) and intermediate density lipoproteins (IDL) but shows a preferential binding to high-density lipoproteins (HDL). It also binds a wide range of cellular receptors including the LDL receptor/LDLR, the LDL receptor-related proteins LRP1, LRP2 and LRP8 and the very low-density lipoprotein receptor/VLDLR that mediate the cellular uptake of the APOE-containing lipoprotein particles. Finally, APOE also has a heparin-binding activity and binds heparan-sulfate proteoglycans on the surface of cells, a property that supports the capture and the receptor-mediated uptake of APOE-containing lipoproteins by cells. A main function of APOE is to mediate lipoprotein clearance through the uptake of chylomicrons, VLDLs, and HDLs by hepatocytes. APOE is also involved in the biosynthesis by the liver of VLDLs as well as their uptake by peripheral tissues ensuring the delivery of triglycerides and energy storage in muscle, heart and adipose tissues. By participating in the lipoprotein-mediated distribution of lipids among tissues, APOE plays a critical role in plasma and tissues lipid homeostasis. APOE is also involved in two steps of reverse cholesterol transport, the HDLs-mediated transport of cholesterol from peripheral tissues to the liver, and thereby plays an important role in cholesterol homeostasis. First, it is functionally associated with ABCA1 in the biogenesis of HDLs in tissues. Second, it is enriched in circulating HDLs and mediates their uptake by hepatocytes. APOE also plays an important role in lipid transport in the central nervous system, regulating neuron survival and sprouting. The chain is Apolipoprotein E (APOE) from Eumetopias jubatus (Steller sea lion).